The sequence spans 230 residues: NAD(P)H-hydrate epimerase (230 aa).

Residues 11 to 218 (AIAVDQELFN…ALQRKYELNL (208 aa)) form the YjeF N-terminal domain. 61-65 (NNGGD) provides a ligand contact to (6S)-NADPHX. The K(+) site is built by N62 and D126. (6S)-NADPHX contacts are provided by residues 130–136 (GFSFKPP) and D159. S162 contributes to the K(+) binding site.

This sequence belongs to the NnrE/AIBP family. The cofactor is K(+).

It carries out the reaction (6R)-NADHX = (6S)-NADHX. The catalysed reaction is (6R)-NADPHX = (6S)-NADPHX. Functionally, catalyzes the epimerization of the S- and R-forms of NAD(P)HX, a damaged form of NAD(P)H that is a result of enzymatic or heat-dependent hydration. This is a prerequisite for the S-specific NAD(P)H-hydrate dehydratase to allow the repair of both epimers of NAD(P)HX. In Drosophila sechellia (Fruit fly), this protein is NAD(P)H-hydrate epimerase.